We begin with the raw amino-acid sequence, 298 residues long: MTSTFRHVALIGKYHAPSASAPSENASNALERIADFLRRQGCEVVLDTQSALHAGLTDYPTLDVDGLGRHCDLGLVVGGDGTMLGVSRHLAQYGTPLIGVNQGRLGFVTDIALEDFEATLTPMLQGEYEEDLRPLMCARVIRDGQCVFEALAMNDVVVNRGGTSGMVELRIEVGGRFVSNQRADGLIVATPTGSTAYALSAGGPMMHPSIPAWVMAPIAPHNLSNRPIVLSDANEVTIEVVAGRDVSANFDMQSLASLQHGDRILVSRAHHSVRFLHPKGWNYFATLRKKLGWNEGGA.

Aspartate 80 (proton acceptor) is an active-site residue. Residues 80–81 (DG), 154–155 (ND), arginine 182, aspartate 184, 195–200 (TAYALS), alanine 219, and glutamine 253 contribute to the NAD(+) site.

The protein belongs to the NAD kinase family. The cofactor is a divalent metal cation.

Its subcellular location is the cytoplasm. The enzyme catalyses NAD(+) + ATP = ADP + NADP(+) + H(+). Functionally, involved in the regulation of the intracellular balance of NAD and NADP, and is a key enzyme in the biosynthesis of NADP. Catalyzes specifically the phosphorylation on 2'-hydroxyl of the adenosine moiety of NAD to yield NADP. The sequence is that of NAD kinase from Delftia acidovorans (strain DSM 14801 / SPH-1).